A 426-amino-acid polypeptide reads, in one-letter code: MKFTLLGFGLSNKEIFKYLVKNGHEVFVSEGKKLASSDKKLLLENGVQFEENGHTEKALECDIILVSPGVHFENEIIKEAKRRSIEIDTEISFCQREFEKIGWTPFVIAVTGSVGKSTTVSLIYHLLNKKVRALLAGNIGIPIAKLLNDNLRANYLVLEISSFQLFWSKRFKPNISSILNIYPNHLNWHPDMEHYVSSKFKIASFQSKDDVFVYNPNDEYIRKNLYKVSAKKVPFRFDFSIEKLPIHLRYRQTVENVAAAKTILETMGYEFKWEFLEDFEKLPHRMEYVTEINGVKFFNDSKATNAIAVIRAIENFDDKLHLIMAGIGKNEDYTLLAKIIKEKVKILALVGPIADEIEPYLDGVRYFKVDTINQAVNQLFSMASRGDVIMLSPGGASFDAFKNFEERGEYFKQLVMQLKEGNCEEC.

112 to 118 (GSVGKST) contacts ATP.

The protein belongs to the MurCDEF family.

Its subcellular location is the cytoplasm. It catalyses the reaction UDP-N-acetyl-alpha-D-muramoyl-L-alanine + D-glutamate + ATP = UDP-N-acetyl-alpha-D-muramoyl-L-alanyl-D-glutamate + ADP + phosphate + H(+). It functions in the pathway cell wall biogenesis; peptidoglycan biosynthesis. Its function is as follows. Cell wall formation. Catalyzes the addition of glutamate to the nucleotide precursor UDP-N-acetylmuramoyl-L-alanine (UMA). The polypeptide is UDP-N-acetylmuramoylalanine--D-glutamate ligase (Thermosipho melanesiensis (strain DSM 12029 / CIP 104789 / BI429)).